A 283-amino-acid chain; its full sequence is Eukaryotic translation initiation factor 3 subunit K (283 aa).

Residues 52–263 (YDLLANLAIL…EIKATVIREE (212 aa)) enclose the PCI domain. Residues 114–135 (EATTTDADNAGSLSGDDDDDEV) are disordered.

Belongs to the eIF-3 subunit K family. Component of the eukaryotic translation initiation factor 3 (eIF-3) complex.

It localises to the cytoplasm. In terms of biological role, component of the eukaryotic translation initiation factor 3 (eIF-3) complex, which is involved in protein synthesis of a specialized repertoire of mRNAs and, together with other initiation factors, stimulates binding of mRNA and methionyl-tRNAi to the 40S ribosome. The eIF-3 complex specifically targets and initiates translation of a subset of mRNAs involved in cell proliferation. In Mycosarcoma maydis (Corn smut fungus), this protein is Eukaryotic translation initiation factor 3 subunit K.